The sequence spans 651 residues: Meiotic expression up-regulated protein 6 (651 aa).

Composition is skewed to basic and acidic residues over residues 1–12 (MSYEGREERPEQ) and 21–30 (VSEHNEHDSG). A disordered region spans residues 1–102 (MSYEGREERP…EKKSKKKAKD (102 aa)). Residues 72 to 83 (TVDNIDPADDDP) show a composition bias toward acidic residues. Basic and acidic residues predominate over residues 90–102 (KVEEKKSKKKAKD). The PH domain occupies 194 to 261 (CRGLLFYSKS…WITDLKNAIA (68 aa)). 3 disordered regions span residues 365 to 430 (TVEA…GTPI), 468 to 514 (VATP…KGGN), and 587 to 630 (TIKP…QMPQ). 2 stretches are compositionally biased toward polar residues: residues 410 to 429 (ESTS…NGTP) and 478 to 490 (PSTA…SVVS). Residues 497 to 514 (KKAGKKHHRHHKKKKGGN) show a composition bias toward basic residues. Residues 587-604 (TIKPETPLTPTTTPTPRT) show a composition bias toward low complexity.

In Schizosaccharomyces pombe (strain 972 / ATCC 24843) (Fission yeast), this protein is Meiotic expression up-regulated protein 6 (meu6).